The chain runs to 117 residues: Fluoride-specific ion channel FluC 2 (117 aa).

The next 2 membrane-spanning stretches (helical) occupy residues 1–21 and 46–66; these read MISI…RSAI and FLIG…AFFV. 2 residues coordinate Na(+): Gly-71 and Thr-74. A helical transmembrane segment spans residues 95–115; the sequence is LFLNYSLLQFIIGFIACYIGY.

Belongs to the fluoride channel Fluc/FEX (TC 1.A.43) family.

Its subcellular location is the cell membrane. It catalyses the reaction fluoride(in) = fluoride(out). Its activity is regulated as follows. Na(+) is not transported, but it plays an essential structural role and its presence is essential for fluoride channel function. Fluoride-specific ion channel. Important for reducing fluoride concentration in the cell, thus reducing its toxicity. The protein is Fluoride-specific ion channel FluC 2 of Staphylococcus aureus (strain NCTC 8325 / PS 47).